We begin with the raw amino-acid sequence, 213 residues long: HTH-type transcriptional regulator SrpR (213 aa).

One can recognise an HTH tetR-type domain in the interval 10 to 70 (EETRQRIIDA…AVLASRQHPL (61 aa)). The H-T-H motif DNA-binding region spans 33–52 (TLDQIARKAGVTRGAVYWHF).

In conjunction with SrpS represses the srpABC operon. The sequence is that of HTH-type transcriptional regulator SrpR (srpR) from Pseudomonas putida (Arthrobacter siderocapsulatus).